The sequence spans 495 residues: Cobyric acid synthase (495 aa).

Positions 249–443 (EININVIRLP…LHGLFDNGAW (195 aa)) constitute a GATase cobBQ-type domain. Cys330 serves as the catalytic Nucleophile. His435 is a catalytic residue.

It belongs to the CobB/CobQ family. CobQ subfamily.

It functions in the pathway cofactor biosynthesis; adenosylcobalamin biosynthesis. In terms of biological role, catalyzes amidations at positions B, D, E, and G on adenosylcobyrinic A,C-diamide. NH(2) groups are provided by glutamine, and one molecule of ATP is hydrogenolyzed for each amidation. The polypeptide is Cobyric acid synthase (Gloeothece citriformis (strain PCC 7424) (Cyanothece sp. (strain PCC 7424))).